The chain runs to 186 residues: Ribosome maturation factor RimP (186 aa).

It belongs to the RimP family.

Its subcellular location is the cytoplasm. Functionally, required for maturation of 30S ribosomal subunits. This Novosphingobium aromaticivorans (strain ATCC 700278 / DSM 12444 / CCUG 56034 / CIP 105152 / NBRC 16084 / F199) protein is Ribosome maturation factor RimP.